Here is a 223-residue protein sequence, read N- to C-terminus: N-acetylmuramic acid 6-phosphate phosphatase (223 aa).

Aspartate 9 acts as the Nucleophile in catalysis. Residues aspartate 9, aspartate 11, and aspartate 168 each contribute to the Mg(2+) site. Aspartate 11 functions as the Proton donor in the catalytic mechanism.

It belongs to the HAD-like hydrolase superfamily. CbbY/CbbZ/Gph/YieH family. Phosphatase MupP subfamily. It depends on Mg(2+) as a cofactor.

The catalysed reaction is N-acetyl-D-muramate 6-phosphate + H2O = N-acetyl-D-muramate + phosphate. Its pathway is cell wall biogenesis; peptidoglycan recycling. Its function is as follows. Specifically catalyzes the dephosphorylation of N-acetylmuramate 6-phosphate (MurNAc-6P) to MurNac. Is involved in peptidoglycan recycling as part of a cell wall recycling pathway that bypasses de novo biosynthesis of the peptidoglycan precursor UDP-MurNAc. Plays a role in intrinsic resistance to fosfomycin, which targets the de novo synthesis of UDP-MurNAc. Shows a very low activity on GlcNAc-6P, and neither alpha-1-phosphorylated MurNAc, GlcNAc, or glucose nor glucosamine-6P or glucose-6P can be used as a substrate. The protein is N-acetylmuramic acid 6-phosphate phosphatase of Pseudomonas putida (strain ATCC 47054 / DSM 6125 / CFBP 8728 / NCIMB 11950 / KT2440).